The following is a 490-amino-acid chain: Beta-N-acetyl-D-glucosaminide beta-1,4-N-acetylglucosaminyl-transferase (490 aa).

Residues 1 to 30 (MYLVVCWGRVTGNMISTRHCFSRCKSRSVR) are Cytoplasmic-facing. Residues 31–50 (VIKATAMLFVAAMLFLALHM) form a helical; Signal-anchor for type II membrane protein membrane-spanning segment. N51, N82, N441, N459, and N485 each carry an N-linked (GlcNAc...) asparagine glycan. At 51–490 (NFSHEASQQN…YLTGNFTIIS (440 aa)) the chain is on the lumenal side.

This sequence belongs to the glycosyltransferase 7 family.

Its subcellular location is the golgi apparatus membrane. The catalysed reaction is an N-acetyl-beta-D-glucosaminyl derivative + UDP-N-acetyl-alpha-D-glucosamine = an N-acetyl-beta-D-glucosaminyl-(1-&gt;4)-N-acetyl-beta-D-glucosaminyl derivative + UDP + H(+). The protein operates within protein modification; protein glycosylation. This Lymnaea stagnalis (Great pond snail) protein is Beta-N-acetyl-D-glucosaminide beta-1,4-N-acetylglucosaminyl-transferase (GNT).